The chain runs to 289 residues: tRNA pseudouridine synthase B (289 aa).

Asp-38 acts as the Nucleophile in catalysis.

This sequence belongs to the pseudouridine synthase TruB family. Type 1 subfamily.

The catalysed reaction is uridine(55) in tRNA = pseudouridine(55) in tRNA. Its function is as follows. Responsible for synthesis of pseudouridine from uracil-55 in the psi GC loop of transfer RNAs. The sequence is that of tRNA pseudouridine synthase B from Clostridium novyi (strain NT).